A 390-amino-acid chain; its full sequence is Nucleotide-sugar uncharacterized transporter 1 (390 aa).

A run of 10 helical transmembrane segments spans residues 61-81 (ICGP…IIFM), 89-109 (IGFE…YLLM), 128-148 (SLLP…LANV), 155-175 (VGFY…AEFL), 182-201 (SFMK…VATV), 206-228 (FSLF…KILW), 249-269 (ITLL…ALSF), 278-298 (AILV…LALG), 306-326 (VVLG…IFGS), and 329-349 (GFIS…YTYL). A compositionally biased stretch (low complexity) spans 356–365 (LKTSSSSSAL). Positions 356 to 390 (LKTSSSSSALSEKKSRFSDLKDDDKNLEPYGSEAV) are disordered. Positions 366 to 382 (SEKKSRFSDLKDDDKNL) are enriched in basic and acidic residues.

It belongs to the TPT transporter family. TPT (TC 2.A.7.9) subfamily.

Its subcellular location is the membrane. This is Nucleotide-sugar uncharacterized transporter 1 from Arabidopsis thaliana (Mouse-ear cress).